We begin with the raw amino-acid sequence, 720 residues long: Fatty acid CoA ligase Acsl3 (720 aa).

The chain crosses the membrane as a helical; Signal-anchor for type III membrane protein span at residues 21 to 41 (ILLYFIHFLISLYTILTYIPF). Residues 42 to 720 (YFFSESRQEK…ADIERMYGRK (679 aa)) are Cytoplasmic-facing. Phosphoserine is present on Ser683.

It belongs to the ATP-dependent AMP-binding enzyme family. The cofactor is Mg(2+).

It is found in the mitochondrion outer membrane. Its subcellular location is the peroxisome membrane. The protein localises to the microsome membrane. The protein resides in the endoplasmic reticulum membrane. The enzyme catalyses a long-chain fatty acid + ATP + CoA = a long-chain fatty acyl-CoA + AMP + diphosphate. It catalyses the reaction (5Z,8Z,11Z,14Z)-eicosatetraenoate + ATP + CoA = (5Z,8Z,11Z,14Z)-eicosatetraenoyl-CoA + AMP + diphosphate. The catalysed reaction is (E)-hexadec-2-enoate + ATP + CoA = (2E)-hexadecenoyl-CoA + AMP + diphosphate. It carries out the reaction 15-hydroxy-(5Z,8Z,11Z,13E)-eicosatetraenoate + ATP + CoA = 15-hydroxy-(5Z,8Z,11Z,13E)-eicosatetraenoyl-CoA + AMP + diphosphate. The enzyme catalyses 12-hydroxy-(5Z,8Z,10E,14Z)-eicosatetraenoate + ATP + CoA = 12-hydroxy-(5Z,8Z,10E,14Z)-eicosatetraenoyl-CoA + AMP + diphosphate. It catalyses the reaction 5-hydroxy-(6E,8Z,11Z,14Z)-eicosatetraenoate + ATP + CoA = 5-hydroxy-(6E,8Z,11Z,14Z)-eicosatetraenoyl-CoA + AMP + diphosphate. The catalysed reaction is 14,15-epoxy-(5Z,8Z,11Z)-eicosatrienoate + ATP + CoA = 14,15-epoxy-(5Z,8Z,11Z)-eicosatrienoyl-CoA + AMP + diphosphate. It carries out the reaction 11,12-epoxy-(5Z,8Z,14Z)-eicosatrienoate + ATP + CoA = 11,12-epoxy-(5Z,8Z,14Z)-eicosatrienoyl-CoA + AMP + diphosphate. The enzyme catalyses a medium-chain fatty acid + ATP + CoA = a medium-chain fatty acyl-CoA + AMP + diphosphate. It catalyses the reaction hexadecanoate + ATP + CoA = hexadecanoyl-CoA + AMP + diphosphate. The catalysed reaction is tetradecanoate + ATP + CoA = tetradecanoyl-CoA + AMP + diphosphate. It carries out the reaction dodecanoate + ATP + CoA = dodecanoyl-CoA + AMP + diphosphate. The enzyme catalyses octadecanoate + ATP + CoA = octadecanoyl-CoA + AMP + diphosphate. It catalyses the reaction eicosanoate + ATP + CoA = eicosanoyl-CoA + AMP + diphosphate. The catalysed reaction is (9Z)-octadecenoate + ATP + CoA = (9Z)-octadecenoyl-CoA + AMP + diphosphate. It carries out the reaction (9Z)-hexadecenoate + ATP + CoA = (9Z)-hexadecenoyl-CoA + AMP + diphosphate. The enzyme catalyses (9Z,12Z)-octadecadienoate + ATP + CoA = (9Z,12Z)-octadecadienoyl-CoA + AMP + diphosphate. It catalyses the reaction (9Z,12Z,15Z)-octadecatrienoate + ATP + CoA = (9Z,12Z,15Z)-octadecatrienoyl-CoA + AMP + diphosphate. The catalysed reaction is (4Z,7Z,10Z,13Z,16Z,19Z)-docosahexaenoate + ATP + CoA = (4Z,7Z,10Z,13Z,16Z,19Z)-docosahexaenoyl-CoA + AMP + diphosphate. It carries out the reaction (5Z,8Z,11Z,14Z,17Z)-eicosapentaenoate + ATP + CoA = (5Z,8Z,11Z,14Z,17Z)-eicosapentaenoyl-CoA + AMP + diphosphate. The enzyme catalyses a fatty acid + ATP + CoA = a fatty acyl-CoA + AMP + diphosphate. In terms of biological role, acyl-CoA synthetases (ACSL) activates long-chain fatty acids for both synthesis of cellular lipids, and degradation via beta-oxidation. Required for the incorporation of fatty acids into phosphatidylcholine, the major phospholipid located on the surface of VLDL (very low density lipoproteins). Has mainly an anabolic role in energy metabolism. Mediates hepatic lipogenesis. Preferentially uses myristate, laurate, arachidonate and eicosapentaenoate as substrates. Both isoforms exhibit the same level of activity. This is Fatty acid CoA ligase Acsl3 from Homo sapiens (Human).